Reading from the N-terminus, the 307-residue chain is Furaquinocin biosynthesis prenyltransferase (307 aa).

It belongs to the aromatic prenyltransferase family. In terms of assembly, monomer.

It catalyses the reaction 2-O,3-dimethylflaviolin + (2E)-geranyl diphosphate = 6-linalyl-2-O,3-dimethylflaviolin + diphosphate. It carries out the reaction 2-O,3-dimethylflaviolin + (2E)-geranyl diphosphate + H(+) = 7-O-geranyl-2-O,3-dimethylflaviolin + diphosphate. Does not require any metal cations for activity. Involved in the biosynthesis of furaquinocin. Catalyzes the transfer of a geranyl group to 2-methoxy-3-methyl-flaviolin to yield 6-prenyl-2-methoxy-3-methyl-flaviolin and 7-O-geranyl-2-methoxy-3-methyl-flaviolin in a 10:1 ratio. Can also use other substrates such as flaviolin or 1,3-dihydroxy naphthalene, and can also use DMAPP as prenyl donor. The sequence is that of Furaquinocin biosynthesis prenyltransferase from Streptomyces sp. (strain KO-3988).